Reading from the N-terminus, the 352-residue chain is C-C chemokine receptor type 5 (352 aa).

Residues 1–30 (MDYQVSSPTYDIDYYTSEPCQKINVKQIAA) are Extracellular-facing. Y3 bears the Sulfotyrosine mark. S6 and S7 each carry an O-linked (GalNAc...) serine glycan. Residues Y10, Y14, and Y15 each carry the sulfotyrosine modification. 2 disulfides stabilise this stretch: C20–C269 and C101–C178. The chain crosses the membrane as a helical span at residues 31–58 (RLLPPLYSLVFIFGFVGNILVVLILINC). The Cytoplasmic segment spans residues 59–68 (KRLKSMTDIY). The chain crosses the membrane as a helical span at residues 69-89 (LLNLAISDLLFLLTVPFWAHY). The Extracellular segment spans residues 90–102 (AAAQWDFGNTMCQ). A helical transmembrane segment spans residues 103–124 (LLTGLYFIGFFSGIFFIILLTI). The Cytoplasmic portion of the chain corresponds to 125–141 (DRYLAIVHAVFALKART). A helical transmembrane segment spans residues 142–166 (VTFGVVTSVITWVVAVFASLPRIIF). At 167-198 (TRSQREGLHYACSSHFPYSQYQFWKNFQTLKI) the chain is on the extracellular side. The chain crosses the membrane as a helical span at residues 199 to 218 (VILGLVLPLLVMVICYSGIL). The Cytoplasmic segment spans residues 219 to 235 (KTLLRCRNEKKRHRAVR). Residues 236 to 260 (LIFTIMIVYFLFWAPYNIVLLLNTF) form a helical membrane-spanning segment. Over 261 to 277 (QEFFGLNNCSSSNRLDQ) the chain is Extracellular. Residues 278–301 (AMQVTETLGMTHCCINPIIYAFVG) form a helical membrane-spanning segment. The Cytoplasmic portion of the chain corresponds to 302 to 352 (EKFRNYLLVFFQKHIAKRFCKCCSIFQQEAPERASSVYTRSTGEQEISVGL). S-palmitoyl cysteine attachment occurs at residues C321, C323, and C324. Phosphoserine; by BARK1 is present on residues S336, S337, S342, and S349.

It belongs to the G-protein coupled receptor 1 family. As to quaternary structure, interacts with PRAF2. Efficient ligand binding to CCL3/MIP-1alpha and CCL4/MIP-1beta requires sulfation, O-glycosylation and sialic acid modifications. Glycosylation on Ser-6 is required for efficient binding of CCL4. Interacts with GRK2. Interacts with ARRB1 and ARRB2. Interacts with CNIH4. Interacts with S100A4; this interaction stimulates T-lymphocyte chemotaxis. Sulfated on at least 2 of the N-terminal tyrosines. Sulfation is required for efficient binding of the chemokines, CCL3 and CCL4. Post-translationally, palmitoylation in the C-terminal is important for cell surface expression. In terms of processing, phosphorylation on serine residues in the C-terminal is stimulated by binding CC chemokines especially by APO-RANTES. O-glycosylated, but not N-glycosylated. Ser-6 appears to be the major site even if Ser-7 may be also O-glycosylated. Also sialylated glycans present which contribute to chemokine binding. Thr-16 and Ser-17 may also be glycosylated and, if so, with small moieties such as a T-antigen.

The protein localises to the cell membrane. Receptor for a number of inflammatory CC-chemokines including CCL3/MIP-1-alpha, CCL4/MIP-1-beta and RANTES and subsequently transduces a signal by increasing the intracellular calcium ion level. May play a role in the control of granulocytic lineage proliferation or differentiation. Participates in T-lymphocyte migration to the infection site by acting as a chemotactic receptor. This chain is C-C chemokine receptor type 5 (CCR5), found in Chlorocebus pygerythrus (Vervet monkey).